The primary structure comprises 867 residues: Bifunctional isopimaradiene synthase, chloroplastic (867 aa).

The N-terminal 68 residues, 1–68 (MALLSSSLSS…VGEGTTSLPY (68 aa)), are a transit peptide targeting the chloroplast. A substrate-binding site is contributed by K267. 2 residues coordinate Mg(2+): D400 and D402. The DXDD motif signature appears at 400–403 (DIDD). K487 is a binding site for substrate. Mg(2+) is bound by residues D619, D623, N763, T767, and E771. The DDXXD motif signature appears at 619–623 (DDLYD).

The protein belongs to the terpene synthase family. Tpsd subfamily. Mg(2+) is required as a cofactor.

The protein localises to the plastid. It localises to the chloroplast. It catalyses the reaction (2E,6E,10E)-geranylgeranyl diphosphate = (+)-copalyl diphosphate. The enzyme catalyses (+)-copalyl diphosphate = isopimara-7,15-diene + diphosphate. The protein operates within terpene metabolism; oleoresin biosynthesis. Functionally, involved in defensive oleoresin formation in conifers in response to insect attack or other injury. Involved in diterpene (C20) olefins biosynthesis. Bifunctional enzyme that catalyzes two sequential cyclizations of geranylgeranyl diphosphate (GGPP) to isopimara-7,15-diene. The polypeptide is Bifunctional isopimaradiene synthase, chloroplastic (TPS-ISO) (Picea abies (Norway spruce)).